The following is a 743-amino-acid chain: Merozoite surface protein 9 (743 aa).

The first 23 residues, 1-23, serve as a signal peptide directing secretion; that stretch reads MMNMKIVLFSLLLFVIRWNIISC. Residues 77 to 235 form an interaction with MSP1 and host SLC4A1/Band 3 region; that stretch reads KELLKEKQYT…VNDEDDVNDE (159 aa). 4 disordered regions span residues 202 to 282, 459 to 487, 512 to 540, and 666 to 743; these read KSQG…ATAY, DNQA…PTED, NNTP…ENFD, and VDAL…EESK. The segment covering 211–224 has biased composition (polar residues); it reads SQNQNENNDNQKYQ. 8 repeat units span residues 226-231, 232-237, 238-243, 244-249, 250-255, 256-261, 262-267, and 268-273. Positions 226-273 are 8 X 6 AA tandem repeats of [VT]-N-D-[ED]-[ED]-D; the sequence is VNDEDDVNDEEDTNDDEDTNDEEDTNDDEDTNDDEDTNDEEDTNDEED. Acidic residues predominate over residues 226 to 274; it reads VNDEDDVNDEEDTNDDEDTNDEEDTNDDEDTNDDEDTNDEEDTNDEEDH. Positions 364–528 are interaction with MSP1 and host SLC4A1/Band 3; sequence LKDNLINYEF…PPTQSKKKNK (165 aa). Basic and acidic residues predominate over residues 459–473; that stretch reads DNQAVDTKSMEEPKV. Residues 512 to 521 are compositionally biased toward low complexity; it reads NNTPNVVPPT. Positions 644-733 form a coiled coil; it reads NQETEEEMEK…QEEEEEEEIV (90 aa). Basic and acidic residues predominate over residues 672 to 721; that stretch reads KNKEEEEKEKEKEEKEKEEKEKEKEEKEKEEKEKEEKEKEEKEEEKKEKE. Acidic residues predominate over residues 722-733; that stretch reads EEQEEEEEEEIV.

It belongs to the plasmodium ABRA family. As to quaternary structure, forms a complex composed of MSP1, MSP6, MSP7, MSP9 and MSP3; within the complex, MSP6 and MSP9 mediate the binding to the host erythrocyte. Interacts with MSP1 subunits p19 and p42; the interaction is direct. Interacts with host SLC4A1/Band 3 protein (via the 5ABC region). MSP1 subunits p19 or p42, and MSP9 form a co-ligand complex that interacts with host SLC4A1/Band 3 protein. Post-translationally, not glycosylated.

The protein resides in the cell membrane. The protein localises to the parasitophorous vacuole lumen. It is found in the secreted. In terms of biological role, during the asexual blood stage, involved in the sialic acid-independent (SAID) merozoite invasion of host erythrocytes by binding to host SLC4A1/Band 3 protein on the surface of the host erythrocyte. In Plasmodium falciparum (isolate 3D7), this protein is Merozoite surface protein 9.